A 223-amino-acid polypeptide reads, in one-letter code: Ribosomal RNA small subunit methyltransferase G (223 aa).

Residues Gly82, Leu87, 133-134 (AE), and Arg151 each bind S-adenosyl-L-methionine.

It belongs to the methyltransferase superfamily. RNA methyltransferase RsmG family.

It is found in the cytoplasm. In terms of biological role, specifically methylates the N7 position of guanine in position 518 of 16S rRNA. In Corynebacterium glutamicum (strain R), this protein is Ribosomal RNA small subunit methyltransferase G.